Reading from the N-terminus, the 181-residue chain is uncharacterized protein (181 aa).

The disordered stretch occupies residues 126 to 148; sequence SYKDKEEEEDEDPEEDDDDPRVQ. The segment covering 131–144 has biased composition (acidic residues); that stretch reads EEEEDEDPEEDDDD.

Belongs to the chlamydial CPn_0422/CT_273/TC_0545 family.

This is an uncharacterized protein from Chlamydia pneumoniae (Chlamydophila pneumoniae).